Reading from the N-terminus, the 251-residue chain is 16S rRNA (guanine(1405)-N(7))-methyltransferase (251 aa).

S-adenosyl-L-methionine contacts are provided by residues Tyr-56, 81 to 83 (HAS), Arg-87, Ala-111, Asp-131, 157 to 158 (DV), Phe-173, and Glu-182.

It belongs to the methyltransferase superfamily. Aminoglycoside resistance family.

It carries out the reaction guanosine(1405) in 16S rRNA + S-adenosyl-L-methionine = N(7)-methylguanosine(1405) in 16S rRNA + S-adenosyl-L-homocysteine. Its function is as follows. Specifically methylates the N(7) position of guanine 1405 in 16S rRNA. Confers resistance to various aminoglycosides, including kanamycin, tobramycin, amikacin, arbekacin, gentamicin, sisomicin and isepamicin. The protein is 16S rRNA (guanine(1405)-N(7))-methyltransferase (rmtB) of Serratia marcescens.